The sequence spans 357 residues: DNA integrity scanning protein DisA (357 aa).

Residues 8-146 (VKSMINILQL…GNLRYTLKDI (139 aa)) form the DAC domain. ATP-binding positions include Gly75, Leu93, and 106–110 (MRHRT).

This sequence belongs to the DisA family. In terms of assembly, homooctamer. Requires Mg(2+) as cofactor.

It carries out the reaction 2 ATP = 3',3'-c-di-AMP + 2 diphosphate. Functionally, participates in a DNA-damage check-point that is active prior to asymmetric division when DNA is damaged. DisA forms globular foci that rapidly scan along the chromosomes during sporulation, searching for lesions. When a lesion is present, DisA pauses at the lesion site. This triggers a cellular response that culminates in a temporary block in sporulation initiation. Also has diadenylate cyclase activity, catalyzing the condensation of 2 ATP molecules into cyclic di-AMP (c-di-AMP). c-di-AMP acts as a signaling molecule that couples DNA integrity with progression of sporulation. The rise in c-di-AMP level generated by DisA while scanning the chromosome, operates as a positive signal that advances sporulation; upon encountering a lesion, the DisA focus arrests at the damaged site and halts c-di-AMP synthesis. In Bacillus anthracis (strain CDC 684 / NRRL 3495), this protein is DNA integrity scanning protein DisA.